Consider the following 151-residue polypeptide: Putative transcriptional regulatory protein TK2151 (151 aa).

Belongs to the Tfx family.

Its function is as follows. Putative transcriptional regulator. This is Putative transcriptional regulatory protein TK2151 from Thermococcus kodakarensis (strain ATCC BAA-918 / JCM 12380 / KOD1) (Pyrococcus kodakaraensis (strain KOD1)).